A 317-amino-acid polypeptide reads, in one-letter code: uncharacterized protein (317 aa).

Helical transmembrane passes span 14–34 (IPLL…ATVS), 72–92 (LIGF…YGAV), 119–139 (LLFG…LDIA), 196–216 (TLLN…FCKQ), 230–250 (LFLG…ADVL), and 291–307 (SNML…WYTY). Solcar repeat units lie at residues 18–103 (SNDL…LKQR), 113–217 (LENH…CKQK), and 224–313 (LTAF…VSKM).

Belongs to the mitochondrial carrier (TC 2.A.29) family.

It is found in the mitochondrion inner membrane. This is an uncharacterized protein from Schizosaccharomyces pombe (strain 972 / ATCC 24843) (Fission yeast).